The sequence spans 97 residues: Intermembrane phospholipid transport system binding protein MlaB (97 aa).

In terms of domain architecture, STAS spans 1–97 (MSESLSWMQT…YNLPADVLPR (97 aa)).

As to quaternary structure, the complex is composed of two ATP-binding proteins (MlaF), two transmembrane proteins (MlaE), two cytoplasmic solute-binding proteins (MlaB) and six periplasmic solute-binding proteins (MlaD).

The protein localises to the cytoplasm. Part of the ABC transporter complex MlaFEDB, which is involved in a phospholipid transport pathway that maintains lipid asymmetry in the outer membrane by retrograde trafficking of phospholipids from the outer membrane to the inner membrane. MlaB plays critical roles in both the assembly and activity of the complex. May act by modulating MlaF structure and stability. In Escherichia coli (strain K12), this protein is Intermembrane phospholipid transport system binding protein MlaB.